Reading from the N-terminus, the 1047-residue chain is Atrial natriuretic peptide receptor 2 (1047 aa).

An N-terminal signal peptide occupies residues 1 to 16 (MALPSLLLVVAALAGG). The Extracellular portion of the chain corresponds to 17 to 458 (VRPPGARNLT…DKTPLSTLAI (442 aa)). Residues N24 and N35 are each glycosylated (N-linked (GlcNAc...) asparagine). Cysteines 75 and 101 form a disulfide. N-linked (GlcNAc...) asparagine glycosylation is found at N161, N195, N244, N277, and N349. Residues 459–478 (VALGTGVTFIMFGVSSFLIF) traverse the membrane as a helical segment. Topologically, residues 479 to 1047 (RKLMLEKELA…GEQKGPPGLL (569 aa)) are cytoplasmic. S513 is subject to Phosphoserine. The 274-residue stretch at 513–786 (SRLTLSLRGS…PDFGQIKGFI (274 aa)) folds into the Protein kinase domain. Phosphothreonine is present on T516. 4 positions are modified to phosphoserine: S518, S522, S523, and S526. T529 is subject to Phosphothreonine. The Guanylate cyclase domain maps to 861–991 (TIYFSDIVGF…DTVNTASRME (131 aa)).

Belongs to the adenylyl cyclase class-4/guanylyl cyclase family. Post-translationally, phosphorylated. Phosphorylation of the protein kinase-like domain is required for full activation by CNP. In terms of processing, glycosylated. As to expression, widely expressed. Expressed in the columnar proliferating and prehypertrophic chondrocyte layers of the tibia.

It is found in the cell membrane. It carries out the reaction GTP = 3',5'-cyclic GMP + diphosphate. Functionally, receptor for the C-type natriuretic peptide NPPC/CNP hormone. Has guanylate cyclase activity upon binding of its ligand. May play a role in the regulation of skeletal growth. The sequence is that of Atrial natriuretic peptide receptor 2 (Npr2) from Mus musculus (Mouse).